Consider the following 405-residue polypeptide: Tryptophan synthase beta chain (405 aa).

Position 95 is an N6-(pyridoxal phosphate)lysine (K95).

Belongs to the TrpB family. Tetramer of two alpha and two beta chains. The cofactor is pyridoxal 5'-phosphate.

The catalysed reaction is (1S,2R)-1-C-(indol-3-yl)glycerol 3-phosphate + L-serine = D-glyceraldehyde 3-phosphate + L-tryptophan + H2O. Its pathway is amino-acid biosynthesis; L-tryptophan biosynthesis; L-tryptophan from chorismate: step 5/5. Functionally, the beta subunit is responsible for the synthesis of L-tryptophan from indole and L-serine. This is Tryptophan synthase beta chain from Pseudomonas entomophila (strain L48).